We begin with the raw amino-acid sequence, 1270 residues long: DNA-directed RNA polymerase subunit beta (1270 aa).

Belongs to the RNA polymerase beta chain family. In terms of assembly, the RNAP catalytic core consists of 2 alpha, 1 beta, 1 beta' and 1 omega subunit. When a sigma factor is associated with the core the holoenzyme is formed, which can initiate transcription.

It carries out the reaction RNA(n) + a ribonucleoside 5'-triphosphate = RNA(n+1) + diphosphate. DNA-dependent RNA polymerase catalyzes the transcription of DNA into RNA using the four ribonucleoside triphosphates as substrates. This is DNA-directed RNA polymerase subunit beta from Phocaeicola vulgatus (strain ATCC 8482 / DSM 1447 / JCM 5826 / CCUG 4940 / NBRC 14291 / NCTC 11154) (Bacteroides vulgatus).